The sequence spans 156 residues: MVHPLIPQLESLARPLAAQLGYQLVQMVFHTNQHPPVLRVDIRPLDPDRETSHADCEAMSQALEVELDRVDLIPGQYVLEVSSPGISNLLTSDRDFVVFKGFAVEVTLDPPYKGKAVWSGHLLGRDEERVALSLKGRRVQLPRASVQRVALSSETD.

This sequence belongs to the RimP family.

It is found in the cytoplasm. Functionally, required for maturation of 30S ribosomal subunits. The sequence is that of Ribosome maturation factor RimP from Synechococcus sp. (strain JA-2-3B'a(2-13)) (Cyanobacteria bacterium Yellowstone B-Prime).